We begin with the raw amino-acid sequence, 1486 residues long: Chromosome partition protein MukB (1486 aa).

34–41 (GGNGAGKS) provides a ligand contact to ATP. Coiled-coil stretches lie at residues 326 to 418 (LEAD…QYNQ), 444 to 480 (LETFQAKELEATEKMLSLEQKMSMAQTAHSQFEQAYQ), and 509 to 603 (RHLA…RAPV). The segment at 666–783 (PGGSEDQRLN…EVPLFGRAAR (118 aa)) is flexible hinge. Coiled-coil stretches lie at residues 835–923 (EAEI…AKLE), 977–1115 (EMLS…TAKA), and 1209–1266 (VEAI…QNVS).

The protein belongs to the SMC family. MukB subfamily. In terms of assembly, homodimerization via its hinge domain. Binds to DNA via its C-terminal region. Interacts, and probably forms a ternary complex, with MukE and MukF via its C-terminal region. The complex formation is stimulated by calcium or magnesium. Interacts with tubulin-related protein FtsZ.

The protein localises to the cytoplasm. Its subcellular location is the nucleoid. Plays a central role in chromosome condensation, segregation and cell cycle progression. Functions as a homodimer, which is essential for chromosome partition. Involved in negative DNA supercoiling in vivo, and by this means organize and compact chromosomes. May achieve or facilitate chromosome segregation by condensation DNA from both sides of a centrally located replisome during cell division. The sequence is that of Chromosome partition protein MukB from Escherichia coli (strain SMS-3-5 / SECEC).